Consider the following 421-residue polypeptide: UDP-N-acetylglucosamine 1-carboxyvinyltransferase (421 aa).

Phosphoenolpyruvate is bound at residue 22–23 (KN). Position 93 (Arg-93) interacts with UDP-N-acetyl-alpha-D-glucosamine. Cys-117 functions as the Proton donor in the catalytic mechanism. Cys-117 is modified (2-(S-cysteinyl)pyruvic acid O-phosphothioketal). Residues 122 to 126 (RPVDL), Asp-308, and Ile-330 each bind UDP-N-acetyl-alpha-D-glucosamine.

This sequence belongs to the EPSP synthase family. MurA subfamily.

Its subcellular location is the cytoplasm. It carries out the reaction phosphoenolpyruvate + UDP-N-acetyl-alpha-D-glucosamine = UDP-N-acetyl-3-O-(1-carboxyvinyl)-alpha-D-glucosamine + phosphate. The protein operates within cell wall biogenesis; peptidoglycan biosynthesis. In terms of biological role, cell wall formation. Adds enolpyruvyl to UDP-N-acetylglucosamine. This chain is UDP-N-acetylglucosamine 1-carboxyvinyltransferase, found in Pseudomonas fluorescens (strain Pf0-1).